Reading from the N-terminus, the 192-residue chain is EFPYLITPLDAITARAQEDGTTVTSSLSDSDTARAAQIAAAADVAIVFISSDSGEGYLTVEGNAGDRNDLLAWHDGDALVQAVADANENTIVAVNTVGAIITEAWIEHPNVKAVVWSGLPGQEAGNSVADILYGAYNPSGRLPYTIAKSADDYPAQVLYESSAQVPDIDYSEGLLVDYRHFDANGIEPRFEF.

Belongs to the glycosyl hydrolase 3 family.

It catalyses the reaction Hydrolysis of terminal, non-reducing beta-D-glucosyl residues with release of beta-D-glucose.. Its pathway is glycan metabolism; cellulose degradation. The polypeptide is Beta-glucosidase (Schizophyllum commune (Split gill fungus)).